The primary structure comprises 163 residues: Small heat shock protein C1 (163 aa).

The 109-residue stretch at 55–163 (MFYESSSIKS…EQDAKEITIN (109 aa)) folds into the sHSP domain.

This sequence belongs to the small heat shock protein (HSP20) family.

This chain is Small heat shock protein C1 (hspC1), found in Rickettsia typhi (strain ATCC VR-144 / Wilmington).